The sequence spans 266 residues: Hydroxyethylthiazole kinase (266 aa).

Residue Met43 coordinates substrate. Residues Arg119 and Thr166 each contribute to the ATP site. Gly193 is a substrate binding site.

It belongs to the Thz kinase family. Mg(2+) is required as a cofactor.

The catalysed reaction is 5-(2-hydroxyethyl)-4-methylthiazole + ATP = 4-methyl-5-(2-phosphooxyethyl)-thiazole + ADP + H(+). Its pathway is cofactor biosynthesis; thiamine diphosphate biosynthesis; 4-methyl-5-(2-phosphoethyl)-thiazole from 5-(2-hydroxyethyl)-4-methylthiazole: step 1/1. Catalyzes the phosphorylation of the hydroxyl group of 4-methyl-5-beta-hydroxyethylthiazole (THZ). The protein is Hydroxyethylthiazole kinase of Methanococcus maripaludis (strain DSM 14266 / JCM 13030 / NBRC 101832 / S2 / LL).